The sequence spans 108 residues: uncharacterized protein (108 aa).

The tract at residues 1–108 (MAKVTSEPQK…DKEQSETSVL (108 aa)) is disordered. Over residues 26 to 56 (KGRKKGKTPRQRRSRSGVKGLKTTRKAKRPL) the composition is skewed to basic residues. The segment covering 58–70 (GSSSQKAGETNTP) has biased composition (polar residues). Residues 73–92 (KPKKARGPILRGRYHRLKEK) show a composition bias toward basic residues. Positions 93 to 108 (MKKEEADKEQSETSVL) are enriched in basic and acidic residues.

This is an uncharacterized protein from Homo sapiens (Human).